The following is a 204-amino-acid chain: Holliday junction branch migration complex subunit RuvA (204 aa).

The domain I stretch occupies residues 1–64 (MIGRLRGIIL…EDAQLLFGFN (64 aa)). The tract at residues 65–143 (SKPERALFRE…GMHGDLFASD (79 aa)) is domain II. The segment at 144-155 (APFALTSEMPKE) is flexible linker. Residues 156–204 (TANDAEGEAVAALTALGYKPQEASRMIVKVGKPDADCETLIREALRAAI) form a domain III region.

It belongs to the RuvA family. As to quaternary structure, homotetramer. Forms an RuvA(8)-RuvB(12)-Holliday junction (HJ) complex. HJ DNA is sandwiched between 2 RuvA tetramers; dsDNA enters through RuvA and exits via RuvB. An RuvB hexamer assembles on each DNA strand where it exits the tetramer. Each RuvB hexamer is contacted by two RuvA subunits (via domain III) on 2 adjacent RuvB subunits; this complex drives branch migration. In the full resolvosome a probable DNA-RuvA(4)-RuvB(12)-RuvC(2) complex forms which resolves the HJ.

The protein resides in the cytoplasm. Its function is as follows. The RuvA-RuvB-RuvC complex processes Holliday junction (HJ) DNA during genetic recombination and DNA repair, while the RuvA-RuvB complex plays an important role in the rescue of blocked DNA replication forks via replication fork reversal (RFR). RuvA specifically binds to HJ cruciform DNA, conferring on it an open structure. The RuvB hexamer acts as an ATP-dependent pump, pulling dsDNA into and through the RuvAB complex. HJ branch migration allows RuvC to scan DNA until it finds its consensus sequence, where it cleaves and resolves the cruciform DNA. This is Holliday junction branch migration complex subunit RuvA from Erwinia tasmaniensis (strain DSM 17950 / CFBP 7177 / CIP 109463 / NCPPB 4357 / Et1/99).